Reading from the N-terminus, the 265-residue chain is Phosphatidylglycerol--prolipoprotein diacylglyceryl transferase (265 aa).

A run of 4 helical transmembrane segments spans residues 10–30 (VAIA…LIGI), 56–76 (LVFW…VLFY), 87–107 (LILQ…GVLL), and 117–137 (GKGF…GLGA). Arginine 139 serves as a coordination point for a 1,2-diacyl-sn-glycero-3-phospho-(1'-sn-glycerol). 3 consecutive transmembrane segments (helical) span residues 172 to 192 (PSQL…LWFY), 200 to 220 (MAVS…VEFV), and 227 to 247 (LGYL…PMIL).

The protein belongs to the Lgt family.

It is found in the cell inner membrane. It carries out the reaction L-cysteinyl-[prolipoprotein] + a 1,2-diacyl-sn-glycero-3-phospho-(1'-sn-glycerol) = an S-1,2-diacyl-sn-glyceryl-L-cysteinyl-[prolipoprotein] + sn-glycerol 1-phosphate + H(+). The protein operates within protein modification; lipoprotein biosynthesis (diacylglyceryl transfer). Its function is as follows. Catalyzes the transfer of the diacylglyceryl group from phosphatidylglycerol to the sulfhydryl group of the N-terminal cysteine of a prolipoprotein, the first step in the formation of mature lipoproteins. The protein is Phosphatidylglycerol--prolipoprotein diacylglyceryl transferase of Azotobacter vinelandii (strain DJ / ATCC BAA-1303).